The chain runs to 283 residues: 4-diphosphocytidyl-2-C-methyl-D-erythritol kinase (283 aa).

Residue Lys-12 is part of the active site. ATP is bound at residue 94 to 104 (PAQAGLGGGSS). Asp-136 is an active-site residue.

The protein belongs to the GHMP kinase family. IspE subfamily.

The catalysed reaction is 4-CDP-2-C-methyl-D-erythritol + ATP = 4-CDP-2-C-methyl-D-erythritol 2-phosphate + ADP + H(+). It participates in isoprenoid biosynthesis; isopentenyl diphosphate biosynthesis via DXP pathway; isopentenyl diphosphate from 1-deoxy-D-xylulose 5-phosphate: step 3/6. Catalyzes the phosphorylation of the position 2 hydroxy group of 4-diphosphocytidyl-2C-methyl-D-erythritol. This chain is 4-diphosphocytidyl-2-C-methyl-D-erythritol kinase, found in Acidovorax ebreus (strain TPSY) (Diaphorobacter sp. (strain TPSY)).